The following is a 786-amino-acid chain: Protein RDM16 (786 aa).

3 stretches are compositionally biased toward basic and acidic residues: residues 1–80 (MDKE…SRDR), 87–112 (RSHE…GARD), and 123–143 (NGER…KDAQ). Disordered stretches follow at residues 1–223 (MDKE…SANL), 255–283 (KKAT…STGT), 532–557 (RPIE…EQKK), and 616–642 (EREQ…KERK). Polar residues predominate over residues 145–164 (SEGSGATNPTSGVTMGASTY). Residues 165–176 (SSIPSEASAAPS) are compositionally biased toward low complexity. The segment covering 177–189 (QTLLTKVSSISTT) has biased composition (polar residues). Positions 190-203 (DENKASVVRSHEVP) are enriched in basic and acidic residues. Low complexity predominate over residues 268–283 (TRVPPSTTTPAVSTGT). Over residues 534–547 (IEPPAEAAPPPPQP) the composition is skewed to pro residues.

It is found in the nucleus. The protein resides in the nucleoplasm. Functionally, functions in the RNA-directed DNA methylation (RdDM) pathway. Acts as a pre-mRNA splicing factor, likely by affecting Pol V transcripts. Affects DNA methylation of transposable elements (TEs) and preferentially influences NRPD1- and ROS1-targeted loci. This Arabidopsis thaliana (Mouse-ear cress) protein is Protein RDM16.